A 326-amino-acid chain; its full sequence is Eukaryotic translation initiation factor 3 subunit I (326 aa).

WD repeat units lie at residues 8–47, 50–89, 145–184, 188–227, and 285–326; these read GHER…RLGT, GHQG…IIAS, MTES…KVVD, DHAA…CLKT, and GHFG…NIFE.

Belongs to the eIF-3 subunit I family. Component of the eukaryotic translation initiation factor 3 (eIF-3) complex. The eIF-3 complex interacts with pix.

It localises to the cytoplasm. Its function is as follows. Component of the eukaryotic translation initiation factor 3 (eIF-3) complex, which is involved in protein synthesis of a specialized repertoire of mRNAs and, together with other initiation factors, stimulates binding of mRNA and methionyl-tRNAi to the 40S ribosome. The eIF-3 complex specifically targets and initiates translation of a subset of mRNAs involved in cell proliferation. The protein is Eukaryotic translation initiation factor 3 subunit I of Drosophila pseudoobscura pseudoobscura (Fruit fly).